We begin with the raw amino-acid sequence, 121 residues long: Large ribosomal subunit protein bL12 (121 aa).

The protein belongs to the bacterial ribosomal protein bL12 family. Homodimer. Part of the ribosomal stalk of the 50S ribosomal subunit. Forms a multimeric L10(L12)X complex, where L10 forms an elongated spine to which 2 to 4 L12 dimers bind in a sequential fashion. Binds GTP-bound translation factors.

Functionally, forms part of the ribosomal stalk which helps the ribosome interact with GTP-bound translation factors. Is thus essential for accurate translation. This is Large ribosomal subunit protein bL12 from Clostridium perfringens (strain ATCC 13124 / DSM 756 / JCM 1290 / NCIMB 6125 / NCTC 8237 / Type A).